The primary structure comprises 367 residues: Adenine deaminase (367 aa).

Residues His-19, His-21, and His-209 each coordinate Zn(2+). The active-site Proton donor is Glu-212. Residue Asp-290 participates in Zn(2+) binding. Asp-291 contributes to the substrate binding site.

The protein belongs to the metallo-dependent hydrolases superfamily. Adenosine and AMP deaminases family. Adenine deaminase type 2 subfamily. Requires Zn(2+) as cofactor.

It is found in the cytoplasm. The protein resides in the nucleus. It catalyses the reaction adenine + H2O + H(+) = hypoxanthine + NH4(+). Functionally, catalyzes the hydrolytic deamination of adenine to hypoxanthine. Plays an important role in the purine salvage pathway and in nitrogen catabolism. Also exhibits a low activity towards N(6)-substituted adenines that are commonly known as the plant hormones cytokinins. The protein is Adenine deaminase of Schizosaccharomyces pombe (strain 972 / ATCC 24843) (Fission yeast).